The chain runs to 289 residues: ATP synthase gamma chain (289 aa).

The protein belongs to the ATPase gamma chain family. F-type ATPases have 2 components, CF(1) - the catalytic core - and CF(0) - the membrane proton channel. CF(1) has five subunits: alpha(3), beta(3), gamma(1), delta(1), epsilon(1). CF(0) has three main subunits: a, b and c.

The protein localises to the cell inner membrane. Its function is as follows. Produces ATP from ADP in the presence of a proton gradient across the membrane. The gamma chain is believed to be important in regulating ATPase activity and the flow of protons through the CF(0) complex. This is ATP synthase gamma chain from Leptospira biflexa serovar Patoc (strain Patoc 1 / ATCC 23582 / Paris).